A 185-amino-acid polypeptide reads, in one-letter code: Large ribosomal subunit protein uL22 (185 aa).

The disordered stretch occupies residues 160-185; it reads VSHDDSQKKKVSKKKLARQKEKMMRE.

Belongs to the universal ribosomal protein uL22 family.

This chain is Large ribosomal subunit protein uL22 (RpL17), found in Maconellicoccus hirsutus (Pink hibiscus mealybug).